Consider the following 239-residue polypeptide: MKVTLFVTCLVDMFETNVGKATVEVLERLGCEIEFPEAQVCCGQPAYNSGHVEAAKEAMKHMIETFEDAEYIVTPSGSCATMFHEYPHVFKDDPKWAKRAQKVADKTYEFTQFIVDVLKVTDVGASLSGIATIHKSCHMTRMLGVKEAPGILLSNVKGLTVRDLPNVQNCCGFGGTFSVKMTPISEQMVDEKVDSVMETGADYLIGADCGCLLNIGGRIERLGKEVKVMHIAEVLNSRS.

The protein belongs to the LutA/YkgE family.

Functionally, is involved in L-lactate degradation and allows cells to grow with lactate as the sole carbon source. The sequence is that of Lactate utilization protein A from Bacillus cereus (strain G9842).